Reading from the N-terminus, the 471-residue chain is Phosphatidate cytidylyltransferase 3 (471 aa).

The segment at 1–72 (MAMEKDLSPN…HRRRSSENLA (72 aa)) is disordered. The segment covering 21-35 (SYPTTPTSRMNTNNQ) has biased composition (polar residues). The next 8 helical transmembrane spans lie at 97-116 (WIRTCSSLWMLGGVVFIIYM), 120-139 (YIWAMVVVIQIFMAKELFFL), 149-169 (LPGFWLLNWHFFFTAMLFVYG), 196-216 (YQMVICYFLYIAGLIWFILTL), 228-250 (YAWTHMILIVVFTQSSFTVANIF), 255-277 (WFLLPAALIAMNDVAAYFFGFYF), 293-313 (GFIGASVATIISAFIFANVLG), and 368-388 (FSLGLFASIMAPFGGFFASGF).

Belongs to the CDS family. Mg(2+) serves as cofactor.

It is found in the membrane. The enzyme catalyses a 1,2-diacyl-sn-glycero-3-phosphate + CTP + H(+) = a CDP-1,2-diacyl-sn-glycerol + diphosphate. It participates in phospholipid metabolism; CDP-diacylglycerol biosynthesis; CDP-diacylglycerol from sn-glycerol 3-phosphate: step 3/3. Its function is as follows. May be involved in the synthesis of minor phospholipids and in modulation of IP3-mediated signal transduction. The chain is Phosphatidate cytidylyltransferase 3 from Arabidopsis thaliana (Mouse-ear cress).